The following is a 740-amino-acid chain: MRLRWTQGGNMWLGVLLTLQLCSSLEGQENSFTINSIHMEMLPGQEVHNGENLTLQCIVDVSTTSSVKPQHQVLFYKDDVLFHNVSSTKNTESYFISEARVYNSGRYKCTVILNNKEKTTAEYKVVVEGVSNPRVTLDKKEVIEGGVVKVTCSVPEEKPPVHFIIEKFELNVRDVKQRREKTANNQNSVTLEFTVEEQDRVILFSCQANVIFGTRVEISDSVRSDLVTVRESFSNPKFHISPKGVIIEGDQLLIKCTIQVTHQAQSFPEIIIQKDKEIVAHSRNGSEAVYSVMATVEHNSNYTCKVEASRISKVSSIMVNITELFSRPKLKSSATRLDQGESLRLWCSIPGAPPEANFTIQKGGMMMLQDQNLTKVASERDSGTYTCVAGIGKVVKRSNEVQIAVCEMLSKPSIFHDSGSEVIKGQTIEVSCQSINGTSPISYQLLKGSDLLASQNVSSNEPAVFKDNPTKDVEYQCIADNCHSHAGMPSKVLRVKVIAPVEEVKLSILLSEEVESGQAIVLQCSVKEGSGPITYKFYKEKENKPFHQVTLNDTQAIWHKPKASKDQEGQYYCLASNRATPSKNFLQSNILAVRVYLAPWKKGLIAVVVIAVIIAVLLLGARFYFLKKSKAKQMPVEMCRPAAPLLNSNNEKTLSDPNTEANRHYGYNEDVGNHAMKPLNENKEPLTLDVEYTEVEVTSPEPHRGLGTKGTETVYSEIRKADPDLVENRYSRTEGSLDGT.

An N-terminal signal peptide occupies residues 1-27 (MRLRWTQGGNMWLGVLLTLQLCSSLEG). Residues 28–602 (QENSFTINSI…VRVYLAPWKK (575 aa)) are Extracellular-facing. 3 Ig-like C2-type domains span residues 35 to 126 (NSIH…YKVV), 145 to 223 (GGVV…DSVR), and 236 to 315 (PKFH…SKVS). N-linked (GlcNAc...) asparagine glycans are attached at residues Asn-52 and Asn-84. 3 disulfides stabilise this stretch: Cys-57/Cys-109, Cys-152/Cys-206, and Cys-256/Cys-304. Asn-284, Asn-301, Asn-320, Asn-357, Asn-372, Asn-436, Asn-456, and Asn-552 each carry an N-linked (GlcNAc...) asparagine glycan. 3 Ig-like C2-type domains span residues 328–404 (PKLK…VQIA), 425–494 (GQTI…KVLR), and 500–592 (PVEE…NILA). 3 cysteine pairs are disulfide-bonded: Cys-347–Cys-387, Cys-432–Cys-477, and Cys-524–Cys-573. A helical membrane pass occupies residues 603–621 (GLIAVVVIAVIIAVLLLGA). Residues 622–740 (RFYFLKKSKA…SRTEGSLDGT (119 aa)) are Cytoplasmic-facing. Short sequence motifs (ITIM motif) lie at residues 690–695 (VEYTEV) and 713–718 (TVYSEI). Tyr-692 and Tyr-715 each carry phosphotyrosine; by FER. Positions 697 to 740 (VTSPEPHRGLGTKGTETVYSEIRKADPDLVENRYSRTEGSLDGT) are disordered. Residues 711-731 (TETVYSEIRKADPDLVENRYS) are membrane-bound segment which detaches upon phosphorylation. Residues 717–732 (EIRKADPDLVENRYSR) show a composition bias toward basic and acidic residues. The tract at residues 723 to 740 (PDLVENRYSRTEGSLDGT) is may play a role in cytoprotective signaling. Ser-731 and Ser-736 each carry phosphoserine.

As to quaternary structure, trans-homodimer (via Ig-like C2-type 1 and Ig-like C2-type 2 domains); trans-homodimerization is required for cell-cell interaction. Forms a complex with BDKRB2 and GNAQ. Interacts with BDKRB2 and GNAQ. Interacts with PTPN11; Tyr-715 is critical for PTPN11 recruitment. Interacts with FER. Interacts with CD177; the interaction is Ca(2+)-dependent; the interaction is direct. Phosphorylated on Ser and Tyr residues by src kinases after cellular activation. Upon activation, phosphorylated on Ser-731 which probably initiates the dissociation of the membrane-interaction segment (residues 711-731) from the cell membrane allowing the sequential phosphorylation of Tyr-715 and Tyr-692. Constitutively phosphorylated on Ser-736 in resting platelets. Phosphorylated on tyrosine residues by FER and FES in response to FCER1 activation. In endothelial cells Fyn mediates mechanical-force (stretch or pull) induced tyrosine phosphorylation. Post-translationally, palmitoylation by ZDHHC21 is necessary for cell surface expression in endothelial cells and enrichment in membrane rafts.

It localises to the cell membrane. Its subcellular location is the membrane raft. The protein localises to the cell junction. In terms of biological role, cell adhesion molecule which is required for leukocyte transendothelial migration (TEM) under most inflammatory conditions. Tyr-692 plays a critical role in TEM and is required for efficient trafficking of PECAM1 to and from the lateral border recycling compartment (LBRC) and is also essential for the LBRC membrane to be targeted around migrating leukocytes. Trans-homophilic interaction may play a role in endothelial cell-cell adhesion via cell junctions. Heterophilic interaction with CD177 plays a role in transendothelial migration of neutrophils. Homophilic ligation of PECAM1 prevents macrophage-mediated phagocytosis of neighboring viable leukocytes by transmitting a detachment signal. Promotes macrophage-mediated phagocytosis of apoptotic leukocytes by tethering them to the phagocytic cells; PECAM1-mediated detachment signal appears to be disabled in apoptotic leukocytes. Modulates bradykinin receptor BDKRB2 activation. Regulates bradykinin- and hyperosmotic shock-induced ERK1/2 activation in endothelial cells. Induces susceptibility to atherosclerosis. This Sus scrofa (Pig) protein is Platelet endothelial cell adhesion molecule (PECAM1).